We begin with the raw amino-acid sequence, 32 residues long: ilv operon leader peptide (32 aa).

In Yersinia pestis, this protein is ilv operon leader peptide (ilvL).